Here is a 238-residue protein sequence, read N- to C-terminus: Small ribosomal subunit protein uS2 (238 aa).

The protein belongs to the universal ribosomal protein uS2 family.

The sequence is that of Small ribosomal subunit protein uS2 from Chloroflexus aurantiacus (strain ATCC 29366 / DSM 635 / J-10-fl).